The following is a 246-amino-acid chain: Phosphate import ATP-binding protein PstB (246 aa).

An ABC transporter domain is found at 3 to 241 (AKTTNLNLFY…PKQEKTKAYL (239 aa)). Residue 35–42 (GASGCGKS) coordinates ATP.

It belongs to the ABC transporter superfamily. Phosphate importer (TC 3.A.1.7) family. The complex is composed of two ATP-binding proteins (PstB), two transmembrane proteins (PstC and PstA) and a solute-binding protein (PstS).

It is found in the cell inner membrane. It carries out the reaction phosphate(out) + ATP + H2O = ADP + 2 phosphate(in) + H(+). Its function is as follows. Part of the ABC transporter complex PstSACB involved in phosphate import. Responsible for energy coupling to the transport system. This Campylobacter jejuni subsp. jejuni serotype O:2 (strain ATCC 700819 / NCTC 11168) protein is Phosphate import ATP-binding protein PstB.